Consider the following 428-residue polypeptide: E3 ubiquitin-protein ligase RNF128 (428 aa).

The N-terminal stretch at 1–38 is a signal peptide; the sequence is MGPPPGIGVYCRGGCGAARLLAWCFLLALSPHAPGSRG. N-linked (GlcNAc...) asparagine glycans are attached at residues N48, N59, and N101. In terms of domain architecture, PA spans 75 to 183; sequence SPLEPVSGVL…LKGTKILQSI (109 aa). The chain crosses the membrane as a helical span at residues 208 to 228; that stretch reads IFFVSVSFFIITAATVGYFIF. The RING-type; atypical zinc finger occupies 277 to 318; the sequence is CAVCIELYKPNDLVRILTCNHIFHKTCVDPWLLEHRTCPMCK. Positions 342–351 are enriched in polar residues; the sequence is VSNEASNTAS. Residues 342 to 428 are disordered; that stretch reads VSNEASNTAS…QEAAVREIKS (87 aa).

In terms of processing, auto-ubiquitinated. Controls the development of T-cell clonal anergy by ubiquitination. As to expression, expressed in brain, kidney, heart, liver, ovary, testis and thymus. Expression increased as early as 4 hours by 5- to 7-fold in anergized cultures as compared to resting or activated cells.

It localises to the cytoplasm. The protein localises to the endomembrane system. Its subcellular location is the cytoskeleton. It is found in the perinuclear region. It catalyses the reaction S-ubiquitinyl-[E2 ubiquitin-conjugating enzyme]-L-cysteine + [acceptor protein]-L-lysine = [E2 ubiquitin-conjugating enzyme]-L-cysteine + N(6)-ubiquitinyl-[acceptor protein]-L-lysine.. Its pathway is protein modification; protein ubiquitination. E3 ubiquitin-protein ligase that catalyzes 'Lys-27', 'Lys-48'- or 'Lys-63'-linked polyubiquitin chains formation and plays a role in different biological processes such as modulation of immune response, cytoskeletal dynamics or protein homeostasis. Inhibits IL2 and IL4 transcription, thereby playing an important role in the induction of the anergic phenotype, a long-term stable state of T-lymphocyte unresponsiveness to antigenic stimulation associated with the blockade of interleukin production. Ubiquitinates ARPC5 with 'Lys-48' linkages and COR1A with 'Lys-63' linkages leading to their degradation, down-regulation of these cytoskeletal components results in impaired lamellipodium formation and reduced accumulation of F-actin at the immunological synapse. Functions in the patterning of the dorsal ectoderm; sensitizes ectoderm to respond to neural-inducing signals. Plays a positive role in innate immune response by promoting 'Lys-63'-linked ubiquitination of TBK1 after RNA- or DNA-virus infection. Regulates alveolar macrophage activation and neutrophil infiltration by interacting with TLR4, targeting it for degradation, and inhibiting NF-kappa-B activation, hence decreasing pro-inflammatory cytokines. Negatively regulates the IL-3/STAT5 signaling pathway by facilitating 'Lys-27'-linked polyubiquitination of IL3RA leading to its degradation via lysosomal pathway. Directly regulates the N-glycosylation process in the endoplasmic reticulum by targeting the glycosyl-transferase RPN1 for ubiquitination and degradation. Other substrates targeted for degradation by RNF128 include transmembrane proteins CD40L, CD83 or the tetraspanin CD151. The protein is E3 ubiquitin-protein ligase RNF128 (Rnf128) of Mus musculus (Mouse).